The sequence spans 309 residues: Elongation factor Ts (309 aa).

The involved in Mg(2+) ion dislocation from EF-Tu stretch occupies residues 82-85 (TDFV).

Belongs to the EF-Ts family.

It localises to the cytoplasm. Its function is as follows. Associates with the EF-Tu.GDP complex and induces the exchange of GDP to GTP. It remains bound to the aminoacyl-tRNA.EF-Tu.GTP complex up to the GTP hydrolysis stage on the ribosome. This Rickettsia peacockii (strain Rustic) protein is Elongation factor Ts.